We begin with the raw amino-acid sequence, 323 residues long: Beta-ketoacyl-[acyl-carrier-protein] synthase III (323 aa).

Residues C113 and H250 contribute to the active site. The ACP-binding stretch occupies residues Q251–R255. N280 is an active-site residue.

The protein belongs to the thiolase-like superfamily. FabH family. Homodimer.

It localises to the cytoplasm. It catalyses the reaction malonyl-[ACP] + acetyl-CoA + H(+) = 3-oxobutanoyl-[ACP] + CO2 + CoA. It functions in the pathway lipid metabolism; fatty acid biosynthesis. Catalyzes the condensation reaction of fatty acid synthesis by the addition to an acyl acceptor of two carbons from malonyl-ACP. Catalyzes the first condensation reaction which initiates fatty acid synthesis and may therefore play a role in governing the total rate of fatty acid production. Possesses both acetoacetyl-ACP synthase and acetyl transacylase activities. Its substrate specificity determines the biosynthesis of branched-chain and/or straight-chain of fatty acids. The chain is Beta-ketoacyl-[acyl-carrier-protein] synthase III from Allorhizobium ampelinum (strain ATCC BAA-846 / DSM 112012 / S4) (Agrobacterium vitis (strain S4)).